The chain runs to 158 residues: NADH-quinone oxidoreductase subunit B (158 aa).

Cys37, Cys38, Cys102, and Cys132 together coordinate [4Fe-4S] cluster.

The protein belongs to the complex I 20 kDa subunit family. As to quaternary structure, NDH-1 is composed of 14 different subunits. Subunits NuoB, C, D, E, F, and G constitute the peripheral sector of the complex. Requires [4Fe-4S] cluster as cofactor.

It is found in the cell inner membrane. The enzyme catalyses a quinone + NADH + 5 H(+)(in) = a quinol + NAD(+) + 4 H(+)(out). In terms of biological role, NDH-1 shuttles electrons from NADH, via FMN and iron-sulfur (Fe-S) centers, to quinones in the respiratory chain. Couples the redox reaction to proton translocation (for every two electrons transferred, four hydrogen ions are translocated across the cytoplasmic membrane), and thus conserves the redox energy in a proton gradient. The polypeptide is NADH-quinone oxidoreductase subunit B (Legionella pneumophila (strain Paris)).